We begin with the raw amino-acid sequence, 866 residues long: Ribosome biogenesis protein BOP1 homolog (866 aa).

Disordered regions lie at residues 1–180 and 214–241; these read MVAN…EETR and PPEA…EEDI. Acidic residues-rich tracts occupy residues 37 to 52, 60 to 146, and 167 to 179; these read VDDE…DEEN, GNDE…LEEP, and TAED…DEET. WD repeat units follow at residues 527-566, 568-608, 697-735, 738-777, 781-820, and 836-866; these read GHTD…CIRT, PTGD…SLLV, KSKG…LLKK, PSCK…RPYQ, LHHS…DLLQ, and VNDF…RLYT.

The protein belongs to the WD repeat BOP1/ERB1 family.

The protein localises to the nucleus. Its subcellular location is the nucleolus. It localises to the nucleoplasm. Its function is as follows. Required for maturation of ribosomal RNAs and formation of the large ribosomal subunit. This is Ribosome biogenesis protein BOP1 homolog from Aedes aegypti (Yellowfever mosquito).